The primary structure comprises 179 residues: Large ribosomal subunit protein uL6 (179 aa).

The protein belongs to the universal ribosomal protein uL6 family. As to quaternary structure, part of the 50S ribosomal subunit.

This protein binds to the 23S rRNA, and is important in its secondary structure. It is located near the subunit interface in the base of the L7/L12 stalk, and near the tRNA binding site of the peptidyltransferase center. The protein is Large ribosomal subunit protein uL6 of Geotalea daltonii (strain DSM 22248 / JCM 15807 / FRC-32) (Geobacter daltonii).